We begin with the raw amino-acid sequence, 333 residues long: Fatty acid hydroxylase domain-containing protein 2 (333 aa).

6 helical membrane-spanning segments follow: residues 29-49 (FILG…TWHL), 77-97 (ILFF…FNGL), 134-154 (TVLF…YPFL), 168-188 (FHWF…LFYY), 215-235 (VISL…PAIV), and 237-257 (PLVM…ALII). The Fatty acid hydroxylase domain occupies 176–299 (AIFTLIEEVL…LGVLDHLHGT (124 aa)).

Belongs to the sterol desaturase family.

The protein resides in the cytoplasm. The protein localises to the membrane. Its function is as follows. Promotes megakaryocyte differentiation by enhancing ERK phosphorylation and up-regulating RUNX1 expression. This chain is Fatty acid hydroxylase domain-containing protein 2 (FAXDC2), found in Macaca fascicularis (Crab-eating macaque).